A 249-amino-acid chain; its full sequence is Ribonuclease 3 (249 aa).

An RNase III domain is found at 20-149 (FKKFQERISV…FIGALYLDQG (130 aa)). Residue Glu-62 coordinates Mg(2+). Asp-66 is an active-site residue. Residues Asp-135 and Glu-138 each contribute to the Mg(2+) site. The active site involves Glu-138. One can recognise a DRBM domain in the interval 175 to 244 (DFKSQLQEFV…AQEALAKLQK (70 aa)). Residues 225 to 249 (RSKKEAEQHAAQEALAKLQKHHMKQ) are disordered.

It belongs to the ribonuclease III family. As to quaternary structure, homodimer. Mg(2+) is required as a cofactor.

The protein localises to the cytoplasm. The catalysed reaction is Endonucleolytic cleavage to 5'-phosphomonoester.. Functionally, digests double-stranded RNA. Involved in the processing of primary rRNA transcript to yield the immediate precursors to the large and small rRNAs (23S and 16S). Processes some mRNAs, and tRNAs when they are encoded in the rRNA operon. Processes pre-crRNA and tracrRNA of type II CRISPR loci if present in the organism. In Bacillus licheniformis (strain ATCC 14580 / DSM 13 / JCM 2505 / CCUG 7422 / NBRC 12200 / NCIMB 9375 / NCTC 10341 / NRRL NRS-1264 / Gibson 46), this protein is Ribonuclease 3.